The sequence spans 298 residues: Nucleotide-binding protein Csal_2229 (298 aa).

8–15 (GRSGSGKS) is a binding site for ATP. 59 to 62 (DARN) provides a ligand contact to GTP.

The protein belongs to the RapZ-like family.

Functionally, displays ATPase and GTPase activities. The protein is Nucleotide-binding protein Csal_2229 of Chromohalobacter salexigens (strain ATCC BAA-138 / DSM 3043 / CIP 106854 / NCIMB 13768 / 1H11).